A 192-amino-acid polypeptide reads, in one-letter code: Small ribosomal subunit protein uS5 (192 aa).

Positions 20–83 (FVDKLVHINR…EAAKRGLIRV (64 aa)) constitute an S5 DRBM domain. Residues 162 to 192 (SVAARRGLKVSALQARRRDADPADTSEAAVA) are disordered.

It belongs to the universal ribosomal protein uS5 family. Part of the 30S ribosomal subunit. Contacts proteins S4 and S8.

In terms of biological role, with S4 and S12 plays an important role in translational accuracy. Located at the back of the 30S subunit body where it stabilizes the conformation of the head with respect to the body. In Methylorubrum extorquens (strain CM4 / NCIMB 13688) (Methylobacterium extorquens), this protein is Small ribosomal subunit protein uS5.